The sequence spans 476 residues: Calcitonin gene-related peptide type 1 receptor (476 aa).

A signal peptide spans 1–33 (METLQMGLLSRSALFKYIIIFLIMINTRGYVLA). Residues 34–154 (SQEQEAKTSV…FTHEKVKTAL (121 aa)) lie on the Extracellular side of the membrane. Cystine bridges form between C63–C89, C80–C120, and C103–C142. N-linked (GlcNAc...) asparagine glycosylation is found at N81, N133, and N138. The helical transmembrane segment at 155-179 (NLYYLTIIGHGLSIASLLISLGIFF) threads the bilayer. Topologically, residues 180–190 (YFKNLSCQRIT) are cytoplasmic. The helical transmembrane segment at 191 to 213 (LHKNLFFSFVCNSIITIISLSAV) threads the bilayer. Residues 214 to 224 (ANNQALVATNP) lie on the Extracellular side of the membrane. Residues 225–253 (VICKISQFIHLYLMGCNYFWMLCEGIYLH) traverse the membrane as a helical segment. Residues 254-267 (TLIVVAVFAEKQHL) lie on the Cytoplasmic side of the membrane. Residues 268 to 288 (MWYYLLGWGFPLIPACIHAVA) traverse the membrane as a helical segment. Residues 289 to 304 (RSLYYNDNCWISSETH) lie on the Extracellular side of the membrane. A helical transmembrane segment spans residues 305–329 (LLYIIHGPICAALLVNLFFLLNIVR). At 330-344 (VLITKLKVTHQAESN) the chain is on the cytoplasmic side. The helical transmembrane segment at 345–366 (LYMKAVRATLILVPLLGIEFVL) threads the bilayer. The Extracellular portion of the chain corresponds to 367–381 (FPWKPEGRIAEEIYD). The helical transmembrane segment at 382 to 402 (YVMHILMHYQGLLVATIFCFF) threads the bilayer. Over 403–476 (NGEVQAVLKR…VFFKTEKQYM (74 aa)) the chain is Cytoplasmic.

The protein belongs to the G-protein coupled receptor 2 family.

The protein resides in the cell membrane. May function as G protein-coupled receptor for calcitonin-gene-related peptides and adrenomedullin. Specificity may be modulated by accessory proteins. May activate cAMP-dependent pathway. This Xenopus laevis (African clawed frog) protein is Calcitonin gene-related peptide type 1 receptor (calcrl).